The primary structure comprises 274 residues: NH(3)-dependent NAD(+) synthetase (274 aa).

46–53 (GISGGQDS) provides a ligand contact to ATP. D52 is a binding site for Mg(2+). Position 140 (R140) interacts with deamido-NAD(+). An ATP-binding site is contributed by T160. E165 contacts Mg(2+). 2 residues coordinate deamido-NAD(+): K173 and D180. ATP contacts are provided by K189 and T211. 260–261 (HK) contacts deamido-NAD(+).

The protein belongs to the NAD synthetase family. As to quaternary structure, homodimer.

It catalyses the reaction deamido-NAD(+) + NH4(+) + ATP = AMP + diphosphate + NAD(+) + H(+). Its pathway is cofactor biosynthesis; NAD(+) biosynthesis; NAD(+) from deamido-NAD(+) (ammonia route): step 1/1. Catalyzes the ATP-dependent amidation of deamido-NAD to form NAD. Uses ammonia as a nitrogen source. This is NH(3)-dependent NAD(+) synthetase from Streptococcus equi subsp. equi (strain 4047).